The primary structure comprises 180 residues: Inner membrane-spanning protein YciB (180 aa).

5 helical membrane-spanning segments follow: residues 22–42 (IYVASGALVAATAVALVLTWL), 50–70 (MTLITFIMVAIFGTLTLVFHN), 76–96 (WKVTVIYTLFALALLISQVVL), 121–141 (AAWALFFLGCGLANIYVAFWL), and 149–169 (FKVFGLTALTLVFTLLSGIYI).

This sequence belongs to the YciB family.

The protein resides in the cell inner membrane. Functionally, plays a role in cell envelope biogenesis, maintenance of cell envelope integrity and membrane homeostasis. The chain is Inner membrane-spanning protein YciB from Edwardsiella ictaluri (strain 93-146).